The sequence spans 168 residues: uncharacterized protein (168 aa).

The 166-residue stretch at 1–166 (MRVLILAENE…FCGELIKILK (166 aa)) folds into the PfpI endopeptidase domain.

This sequence belongs to the peptidase C56 family.

This is an uncharacterized protein from Archaeoglobus fulgidus (strain ATCC 49558 / DSM 4304 / JCM 9628 / NBRC 100126 / VC-16).